The sequence spans 333 residues: 4-hydroxyproline epimerase (333 aa).

Cys-90 functions as the Proton acceptor in the catalytic mechanism. Substrate-binding positions include 91–92 (GH) and Asp-249. The active-site Proton donor is the Cys-253. 254-255 (GT) lines the substrate pocket.

Belongs to the proline racemase family. As to quaternary structure, homodimer.

It carries out the reaction trans-4-hydroxy-L-proline = cis-4-hydroxy-D-proline. Its function is as follows. Allows intracellular utilization of 4-hydroxyproline, one of the major constituents of host collagen, by converting 4-hydroxy-L-proline to 4-hydroxy-D-proline, which can be further metabolized by intracellular 4-hydroxy-D-proline oxidases. Strong B-cell mitogen. Plays an important role in the regulation of intra- and extracellular amino acid pools, allowing the bacterium to profit from host precursors and enzymatic pathways. This chain is 4-hydroxyproline epimerase, found in Brucella abortus (strain S19).